A 293-amino-acid chain; its full sequence is N-acetylneuraminate lyase (293 aa).

2 residues coordinate aceneuramate: serine 48 and serine 49. The Proton donor role is filled by tyrosine 137. Lysine 165 serves as the catalytic Schiff-base intermediate with substrate. Threonine 167, glycine 189, aspartate 191, glutamate 192, and serine 208 together coordinate aceneuramate.

It belongs to the DapA family. NanA subfamily. In terms of assembly, homotetramer.

It localises to the cytoplasm. It catalyses the reaction aceneuramate = aldehydo-N-acetyl-D-mannosamine + pyruvate. It functions in the pathway amino-sugar metabolism; N-acetylneuraminate degradation; D-fructose 6-phosphate from N-acetylneuraminate: step 1/5. Functionally, catalyzes the reversible aldol cleavage of N-acetylneuraminic acid (sialic acid; Neu5Ac) to form pyruvate and N-acetylmannosamine (ManNAc) via a Schiff base intermediate. This is N-acetylneuraminate lyase from Staphylococcus aureus (strain Mu3 / ATCC 700698).